A 252-amino-acid polypeptide reads, in one-letter code: 3-dehydroquinate dehydratase (252 aa).

3-dehydroquinate contacts are provided by residues Ser-21, 46–48 (EWR), and Arg-82. Catalysis depends on His-143, which acts as the Proton donor/acceptor. The active-site Schiff-base intermediate with substrate is the Lys-170. Residues Arg-213, Ser-232, and Gln-236 each coordinate 3-dehydroquinate.

The protein belongs to the type-I 3-dehydroquinase family. As to quaternary structure, homodimer.

It catalyses the reaction 3-dehydroquinate = 3-dehydroshikimate + H2O. It functions in the pathway metabolic intermediate biosynthesis; chorismate biosynthesis; chorismate from D-erythrose 4-phosphate and phosphoenolpyruvate: step 3/7. Involved in the third step of the chorismate pathway, which leads to the biosynthesis of aromatic amino acids. Catalyzes the cis-dehydration of 3-dehydroquinate (DHQ) and introduces the first double bond of the aromatic ring to yield 3-dehydroshikimate. This Salmonella choleraesuis (strain SC-B67) protein is 3-dehydroquinate dehydratase.